A 1393-amino-acid chain; its full sequence is Protein strawberry notch homolog 1 (1393 aa).

The disordered stretch occupies residues 129-148 (STRPSVSAPTVRNAMTSAPS). The residue at position 148 (serine 148) is a Phosphoserine. Residue lysine 149 is modified to N6-acetyllysine. Phosphoserine is present on residues serine 162 and serine 214. The residue at position 413 (lysine 413) is an N6-acetyllysine. The tract at residues 687 to 840 (APSNNSSPRD…ANSNTNSNSS (154 aa)) is disordered. Serine 692, serine 693, and serine 697 each carry phosphoserine. Basic and acidic residues predominate over residues 697-716 (SPCKENKIKKRKGEEITREA). Over residues 733–747 (SGSESDASDNEESDY) the composition is skewed to acidic residues. Residues serine 754, serine 755, and serine 768 each carry the phosphoserine modification. Acidic residues predominate over residues 756–775 (GDDDDFNPFLDESNEDDEND). Residues 781-793 (KDHKKNKEKKKKK) show a composition bias toward basic residues. Phosphoserine is present on residues serine 794 and serine 815. Low complexity predominate over residues 824-840 (PAPNSTPANSNTNSNSS). Positions 843 to 870 (TSQDAVERAQQMKKDLLDKLEKLAEDLP) form a coiled coil. Lysine 1222 bears the N6-acetyllysine mark. Residue serine 1386 is modified to Phosphoserine.

It belongs to the SBNO family.

The protein resides in the nucleus. Its function is as follows. Plays a crucial role in the regulation of neural stem cells (NSCs) proliferation. Enhances the phosphorylation of GSK3B through the PI3K-Akt signaling pathway, thereby upregulating the Wnt/beta-catenin signaling pathway and promoting the proliferation of NSCs. Improves ischemic stroke recovery while inhibiting neuroinflammation through small extracellular vesicles (sEVs)-mediated mechanism. Enhances the secretion of sEVs from NSCs, which in turn inhibit both the MAPK and NF-kappaB pathways in microglia. This inhibition suppresses the pro-inflammatory M1 polarization of microglia, promoting a shift towards the M2 anti-inflammatory phenotype, which is beneficial for reducing neuroinflammation. The sequence is that of Protein strawberry notch homolog 1 (SBNO1) from Homo sapiens (Human).